The following is an 811-amino-acid chain: G-type lectin S-receptor-like serine/threonine-protein kinase LECRK2 (811 aa).

The signal sequence occupies residues 1 to 23 (MAPLLFLPILQLLLLYCTKSAQA). The Bulb-type lectin domain maps to 24–153 (QLNISIGSSL…DGATKWESFG (130 aa)). Over 24-464 (QLNISIGSSL…DKKYWILGSS (441 aa)) the chain is Extracellular. N-linked (GlcNAc...) asparagine glycans are attached at residues N26, N39, N59, N219, N226, N237, and N242. Positions 292–344 (PENICQTIQTKVGSGACGFNSYCTFDGTKNTTNCLCPQRYKFFDNERTYKGCR) constitute an EGF-like; atypical domain. 5 cysteine pairs are disulfide-bonded: C296-C314, C308-C325, C327-C343, C389-C411, and C393-C399. N-linked (GlcNAc...) asparagine glycosylation occurs at N321. The PAN domain occupies 352 to 436 (CDLDETAAMV…LQATVLLKVP (85 aa)). A helical membrane pass occupies residues 465 to 485 (LFFGSSVLVNFLLIFVLLFGT). The Cytoplasmic segment spans residues 486-811 (YCSITSRKKT…DPSSYISSLA (326 aa)). In terms of domain architecture, Protein kinase spans 521 to 795 (GGFHEVLGTG…KVMQMLDGAV (275 aa)). ATP contacts are provided by residues 527–535 (LGTGASGIV) and K551. Catalysis depends on D645, which acts as the Proton acceptor.

The protein belongs to the protein kinase superfamily. Ser/Thr protein kinase family.

The protein resides in the membrane. It catalyses the reaction L-seryl-[protein] + ATP = O-phospho-L-seryl-[protein] + ADP + H(+). The enzyme catalyses L-threonyl-[protein] + ATP = O-phospho-L-threonyl-[protein] + ADP + H(+). In terms of biological role, involved in resistance against the herbivorous insect brown planthopper (N.lugens, BPH). Member of the BPH3 (BPH resistance locus 3) cluster which contains LECRK1, LECRK2 and LECRK3. This is G-type lectin S-receptor-like serine/threonine-protein kinase LECRK2 from Oryza sativa subsp. japonica (Rice).